The chain runs to 75 residues: RNA-binding protein KhpA (75 aa).

The region spanning 29–75 (SIIIELKVAPEDMGKVIGKQGRIAQAIRTLVKAAALKEKKRVIVEII) is the KH domain.

This sequence belongs to the KhpA RNA-binding protein family. Forms a complex with KhpB.

Its subcellular location is the cytoplasm. Its function is as follows. A probable RNA chaperone. Forms a complex with KhpB which binds to cellular RNA and controls its expression. Plays a role in peptidoglycan (PG) homeostasis and cell length regulation. The protein is RNA-binding protein KhpA of Caldanaerobacter subterraneus subsp. tengcongensis (strain DSM 15242 / JCM 11007 / NBRC 100824 / MB4) (Thermoanaerobacter tengcongensis).